The primary structure comprises 105 residues: Protein Rev (105 aa).

A Phosphoserine; by host CK2 modification is found at S5. A homomultimerization region spans residues 18–26; the sequence is IIKILYQSN. The segment covering 24–35 has biased composition (polar residues); the sequence is QSNPYPDSSQGT. Disordered stretches follow at residues 24 to 49 and 65 to 105; these read QSNP…WRAR and LGGP…ATTE. Residues 35–51 carry the Nuclear localization signal and RNA-binding (RRE) motif; it reads TRQARRNRRRRWRARQR. A compositionally biased stretch (basic residues) spans 37–49; it reads QARRNRRRRWRAR. Residues 74 to 85 carry the Nuclear export signal and binding to XPO1 motif; it reads LPLPPLGRLTLD. Residues 95 to 105 are compositionally biased toward polar residues; that stretch reads TESQQGTATTE.

It belongs to the HIV-1 REV protein family. As to quaternary structure, homomultimer; when bound to the RRE. Multimeric assembly is essential for activity and may involve XPO1. Binds to human KPNB1, XPO1, TNPO1, RANBP5 and IPO7. Interacts with the viral Integrase. Interacts with human KHDRBS1. Interacts with human NAP1; this interaction decreases Rev multimerization and stimulates its activity. Interacts with human DEAD-box helicases DDX3 and DDX24; these interactions may serve for viral RNA export to the cytoplasm and packaging, respectively. Interacts with human PSIP1; this interaction may inhibit HIV-1 DNA integration by promoting dissociation of the Integrase-LEDGF/p75 complex. Asymmetrically arginine dimethylated at one site by host PRMT6. Methylation impairs the RNA-binding activity and export of viral RNA from the nucleus to the cytoplasm. In terms of processing, phosphorylated by protein kinase CK2. Presence of, and maybe binding to the N-terminus of the regulatory beta subunit of CK2 is necessary for CK2-mediated Rev's phosphorylation.

The protein resides in the host nucleus. Its subcellular location is the host nucleolus. It is found in the host cytoplasm. Escorts unspliced or incompletely spliced viral pre-mRNAs (late transcripts) out of the nucleus of infected cells. These pre-mRNAs carry a recognition sequence called Rev responsive element (RRE) located in the env gene, that is not present in fully spliced viral mRNAs (early transcripts). This function is essential since most viral proteins are translated from unspliced or partially spliced pre-mRNAs which cannot exit the nucleus by the pathway used by fully processed cellular mRNAs. Rev itself is translated from a fully spliced mRNA that readily exits the nucleus. Rev's nuclear localization signal (NLS) binds directly to KPNB1/Importin beta-1 without previous binding to KPNA1/Importin alpha-1. KPNB1 binds to the GDP bound form of RAN (Ran-GDP) and targets Rev to the nucleus. In the nucleus, the conversion from Ran-GDP to Ran-GTP dissociates Rev from KPNB1 and allows Rev's binding to the RRE in viral pre-mRNAs. Rev multimerization on the RRE via cooperative assembly exposes its nuclear export signal (NES) to the surface. Rev can then form a complex with XPO1/CRM1 and Ran-GTP, leading to nuclear export of the complex. Conversion from Ran-GTP to Ran-GDP mediates dissociation of the Rev/RRE/XPO1/RAN complex, so that Rev can return to the nucleus for a subsequent round of export. Beside KPNB1, also seems to interact with TNPO1/Transportin-1, RANBP5/IPO5 and IPO7/RANBP7 for nuclear import. The nucleoporin-like HRB/RIP is an essential cofactor that probably indirectly interacts with Rev to release HIV RNAs from the perinuclear region to the cytoplasm. This Homo sapiens (Human) protein is Protein Rev.